The chain runs to 452 residues: Adenylosuccinate synthetase (452 aa).

GTP contacts are provided by residues G40–K46 and G68–T70. D41 acts as the Proton acceptor in catalysis. 2 residues coordinate Mg(2+): D41 and G68. IMP-binding positions include D41–K44, N66–H69, T158, R172, N250, T265, and R329. Catalysis depends on H69, which acts as the Proton donor. V325 to R331 is a substrate binding site. GTP contacts are provided by residues R331, K357–D359, and G440–G442.

This sequence belongs to the adenylosuccinate synthetase family. Homodimer. Mg(2+) is required as a cofactor.

The protein localises to the cytoplasm. It carries out the reaction IMP + L-aspartate + GTP = N(6)-(1,2-dicarboxyethyl)-AMP + GDP + phosphate + 2 H(+). It participates in purine metabolism; AMP biosynthesis via de novo pathway; AMP from IMP: step 1/2. In terms of biological role, plays an important role in the de novo pathway and in the salvage pathway of purine nucleotide biosynthesis. Catalyzes the first committed step in the biosynthesis of AMP from IMP. This chain is Adenylosuccinate synthetase, found in Drosophila grimshawi (Hawaiian fruit fly).